The following is a 213-amino-acid chain: Kynurenine formamidase (213 aa).

Substrate is bound at residue W18. 3 residues coordinate Zn(2+): H48, H52, and D54. H58 acts as the Proton donor/acceptor in catalysis. 2 residues coordinate Zn(2+): H160 and E172.

This sequence belongs to the Cyclase 1 superfamily. KynB family. In terms of assembly, homodimer. It depends on Zn(2+) as a cofactor.

It catalyses the reaction N-formyl-L-kynurenine + H2O = L-kynurenine + formate + H(+). Its pathway is amino-acid degradation; L-tryptophan degradation via kynurenine pathway; L-kynurenine from L-tryptophan: step 2/2. Functionally, catalyzes the hydrolysis of N-formyl-L-kynurenine to L-kynurenine, the second step in the kynurenine pathway of tryptophan degradation. The polypeptide is Kynurenine formamidase (Burkholderia pseudomallei (strain 1106a)).